The primary structure comprises 76 residues: Small ribosomal subunit protein bS18 (76 aa).

This sequence belongs to the bacterial ribosomal protein bS18 family. As to quaternary structure, part of the 30S ribosomal subunit. Forms a tight heterodimer with protein bS6.

Functionally, binds as a heterodimer with protein bS6 to the central domain of the 16S rRNA, where it helps stabilize the platform of the 30S subunit. The protein is Small ribosomal subunit protein bS18 of Pseudomonas entomophila (strain L48).